The chain runs to 382 residues: Transforming growth factor beta-1 proprotein (382 aa).

The signal sequence occupies residues 1 to 20 (MRAVCLMLTALLMLEYVCRS). The straightjacket domain stretch occupies residues 23–68 (MSTCKSLDLELVKRKRIEAIRGQILSKLRLPKEPEIDQEGDTEEVP). The interval 69 to 264 (ASLMSIYNST…SLPVERHSQL (196 aa)) is arm domain. Asparagine 76, asparagine 116, and asparagine 125 each carry an N-linked (GlcNAc...) asparagine glycan. Positions 218–243 (GKPMEEFRFKISGMNKLRGNTETLAM) are bowtie tail. Residues 235–237 (RGN) carry the Cell attachment site motif. Intrachain disulfides connect cysteine 278–cysteine 286, cysteine 285–cysteine 348, cysteine 314–cysteine 379, and cysteine 318–cysteine 381.

Belongs to the TGF-beta family. Latency-associated peptide: Homodimer; disulfide-linked. Latency-associated peptide: Interacts with Transforming growth factor beta-1 (TGF-beta-1) chain; interaction is non-covalent and maintains (TGF-beta-1) in a latent state; each Latency-associated peptide (LAP) monomer interacts with TGF-beta-1 in the other monomer. Transforming growth factor beta-1: Homodimer; disulfide-linked. Transforming growth factor beta-1: Interacts with TGF-beta receptors (tgfbr1 and tgfbr2), leading to signal transduction. Interacts with EFEMP2. Transforming growth factor beta-1 proprotein: The precursor proprotein is cleaved in the Golgi apparatus to form Transforming growth factor beta-1 (TGF-beta-1) and Latency-associated peptide (LAP) chains, which remain non-covalently linked, rendering TGF-beta-1 inactive. As to expression, expressed in blood leukocytes, kidney macrophages, brain, gill and spleen but not in liver.

The protein resides in the secreted. The protein localises to the extracellular space. It is found in the extracellular matrix. Transforming growth factor beta-1 proprotein: Precursor of the Latency-associated peptide (LAP) and Transforming growth factor beta-1 (TGF-beta-1) chains, which constitute the regulatory and active subunit of TGF-beta-1, respectively. Functionally, required to maintain the Transforming growth factor beta-1 (TGF-beta-1) chain in a latent state during storage in extracellular matrix. Associates non-covalently with TGF-beta-1 and regulates its activation via interaction with 'milieu molecules', such as LTBP1, LRRC32/GARP and LRRC33/NRROS, that control activation of TGF-beta-1. Interaction with integrins (ITGAV:ITGB6 or ITGAV:ITGB8) results in distortion of the Latency-associated peptide chain and subsequent release of the active TGF-beta-1. In terms of biological role, transforming growth factor beta-1: Multifunctional protein that regulates the growth and differentiation of various cell types and is involved in various processes, such as normal development, immune function, microglia function and responses to neurodegeneration. Activation into mature form follows different steps: following cleavage of the proprotein in the Golgi apparatus, Latency-associated peptide (LAP) and Transforming growth factor beta-1 (TGF-beta-1) chains remain non-covalently linked rendering TGF-beta-1 inactive during storage in extracellular matrix. At the same time, LAP chain interacts with 'milieu molecules', such as ltbp1, lrrc32/garp and lrrc33/nrros that control activation of TGF-beta-1 and maintain it in a latent state during storage in extracellular milieus. TGF-beta-1 is released from LAP by integrins (ITGAV:ITGB6 or ITGAV:ITGB8): integrin-binding to LAP stabilizes an alternative conformation of the LAP bowtie tail and results in distortion of the LAP chain and subsequent release of the active TGF-beta-1. Once activated following release of LAP, TGF-beta-1 acts by binding to TGF-beta receptors (tgfbr1 and tgfbr2), which transduce signal. While expressed by many cells types, TGF-beta-1 only has a very localized range of action within cell environment thanks to fine regulation of its activation by Latency-associated peptide chain (LAP) and 'milieu molecules'. Plays an important role in bone remodeling: acts as a potent stimulator of osteoblastic bone formation. Can promote either T-helper 17 cells (Th17) or regulatory T-cells (Treg) lineage differentiation in a concentration-dependent manner. Can induce epithelial-to-mesenchymal transition (EMT) and cell migration in various cell types. This Oncorhynchus mykiss (Rainbow trout) protein is Transforming growth factor beta-1 proprotein (tgfb1).